The sequence spans 599 residues: Thiamine transporter THI72 (599 aa).

11 helical membrane-spanning segments follow: residues W42 to I62, I78 to P98, F112 to V132, L174 to H194, Y197 to L217, I280 to A300, F333 to F353, G372 to S392, F395 to C415, A447 to N467, and S484 to F504. Residues H553–A599 form a disordered region. Phosphoserine occurs at positions 560 and 572. The span at E579–S590 shows a compositional bias: basic and acidic residues.

Belongs to the purine-cytosine permease (2.A.39) family.

It localises to the membrane. Functionally, low affinity thiamine transporter responsible for intake of thiamine. It is possible that the primary function is the uptake of closely related compounds and that thiamine transport is a secondary activity of these proteins. The chain is Thiamine transporter THI72 (THI72) from Saccharomyces cerevisiae (strain ATCC 204508 / S288c) (Baker's yeast).